A 111-amino-acid chain; its full sequence is Class I hydrophobin SC4 (111 aa).

The first 25 residues, 1-25, serve as a signal peptide directing secretion; the sequence is MRFSLALLALPALAAAAPVPGGGKG. 4 disulfide bridges follow: C30–C37, C38–C72, C86–C92, and C93–C106. N-linked (GlcNAc...) asparagine glycosylation is present at N39.

The protein belongs to the fungal hydrophobin family. In terms of assembly, self-assembles to form functional amyloid fibrils called rodlets. Self-assembly into fibrillar rodlets occurs spontaneously at hydrophobic:hydrophilic interfaces and the rodlets further associate laterally to form amphipathic monolayers.

It localises to the secreted. The protein resides in the cell wall. In terms of biological role, aerial growth, conidiation, and dispersal of filamentous fungi in the environment rely upon a capability of their secreting small amphipathic proteins called hydrophobins (HPBs) with low sequence identity. Class I can self-assemble into an outermost layer of rodlet bundles on aerial cell surfaces, conferring cellular hydrophobicity that supports fungal growth, development and dispersal; whereas Class II form highly ordered films at water-air interfaces through intermolecular interactions but contribute nothing to the rodlet structure. SC4 is a dikaryon-specific class I hydrophobin that contributes to the formation of aerial hyphae and fruiting bodies. Plays a role within fruiting bodies by preventing gas channels filling with water under wet conditions, probably serving uninterrupted gas exchange. SC4 cannot fully substitute for SC3. Involved in the unusual characteristic of mounds to adhere to and completely envelop adjacent fruiting bodies on mosaic colonies. This chain is Class I hydrophobin SC4, found in Schizophyllum commune (Split gill fungus).